Consider the following 347-residue polypeptide: DNA-directed RNA polymerase subunit alpha (347 aa).

An alpha N-terminal domain (alpha-NTD) region spans residues 1-226 (MLISQRPTLS…ELFGLARELN (226 aa)). The alpha C-terminal domain (alpha-CTD) stretch occupies residues 241 to 347 (ADHIASFALP…DQDYAETEQL (107 aa)).

The protein belongs to the RNA polymerase alpha chain family. As to quaternary structure, homodimer. The RNAP catalytic core consists of 2 alpha, 1 beta, 1 beta' and 1 omega subunit. When a sigma factor is associated with the core the holoenzyme is formed, which can initiate transcription.

The enzyme catalyses RNA(n) + a ribonucleoside 5'-triphosphate = RNA(n+1) + diphosphate. Functionally, DNA-dependent RNA polymerase catalyzes the transcription of DNA into RNA using the four ribonucleoside triphosphates as substrates. This chain is DNA-directed RNA polymerase subunit alpha, found in Mycobacterium avium (strain 104).